The following is a 306-amino-acid chain: Oxygen-dependent coproporphyrinogen-III oxidase (306 aa).

Serine 94 contributes to the substrate binding site. A divalent metal cation is bound by residues histidine 98 and histidine 108. Catalysis depends on histidine 108, which acts as the Proton donor. Position 110 to 112 (110 to 112 (NVR)) interacts with substrate. Residues histidine 147 and histidine 177 each contribute to the a divalent metal cation site. Residues 242-277 (YVEFNLVYDRGTLFGLQTGGRTESILMSMPPLVRWE) are important for dimerization. 260–262 (GGR) is a substrate binding site.

It belongs to the aerobic coproporphyrinogen-III oxidase family. As to quaternary structure, homodimer. A divalent metal cation is required as a cofactor.

Its subcellular location is the cytoplasm. It carries out the reaction coproporphyrinogen III + O2 + 2 H(+) = protoporphyrinogen IX + 2 CO2 + 2 H2O. It functions in the pathway porphyrin-containing compound metabolism; protoporphyrin-IX biosynthesis; protoporphyrinogen-IX from coproporphyrinogen-III (O2 route): step 1/1. In terms of biological role, involved in the heme biosynthesis. Catalyzes the aerobic oxidative decarboxylation of propionate groups of rings A and B of coproporphyrinogen-III to yield the vinyl groups in protoporphyrinogen-IX. The chain is Oxygen-dependent coproporphyrinogen-III oxidase from Shewanella woodyi (strain ATCC 51908 / MS32).